The following is a 114-amino-acid chain: C-X-C motif chemokine 5 (114 aa).

The signal sequence occupies residues 1 to 36; the sequence is MSLLSSRAARVPGPSSSLCALLVLLLLLTQPGPIAS. 2 cysteine pairs are disulfide-bonded: Cys49–Cys75 and Cys51–Cys91.

This sequence belongs to the intercrine alpha (chemokine CxC) family. As to quaternary structure, monomer. Homodimer. Post-translationally, N-terminal processed forms ENA-78(8-78) and ENA-78(9-78) are produced by proteolytic cleavage after secretion from peripheral blood monocytes.

The protein localises to the secreted. In terms of biological role, involved in neutrophil activation. In vitro, ENA-78(8-78) and ENA-78(9-78) show a threefold higher chemotactic activity for neutrophil granulocytes. This Homo sapiens (Human) protein is C-X-C motif chemokine 5 (CXCL5).